Here is a 378-residue protein sequence, read N- to C-terminus: Stimulator of interferon genes protein (378 aa).

Residues M1–R17 lie on the Cytoplasmic side of the membrane. The mediates interaction with ZDHHC1 and ZDHHC11 stretch occupies residues M1–L189. A helical transmembrane segment spans residues S18–W34. K19 participates in a covalent cross-link: Glycyl lysine isopeptide (Lys-Gly) (interchain with G-Cter in ubiquitin). The Lumenal segment spans residues V35–L44. Residues K45–E69 form a helical membrane-spanning segment. Residues L70–C91 are Cytoplasmic-facing. Residues C88 and C91 are each lipidated (S-palmitoyl cysteine). A helical membrane pass occupies residues P92–Y106. The Lumenal segment spans residues F107–Y115. A helical transmembrane segment spans residues L116 to L133. Over G134–I378 the chain is Cytoplasmic. K150 is covalently cross-linked (Glycyl lysine isopeptide (Lys-Gly) (interchain with G-Cter in ubiquitin)). The cyclic dinucleotide-binding domain (CBD) stretch occupies residues L152–E339. G165 lines the 3',3'-c-di-GMP pocket. Y166 provides a ligand contact to 2',3'-cUAMP. Residue Y166 coordinates 3',3'-cGAMP. Residue K235 forms a Glycyl lysine isopeptide (Lys-Gly) (interchain with G-Cter in ubiquitin) linkage. Position 237 (R237) interacts with 2',3'-cUAMP. Position 237 (R237) interacts with 3',3'-cGAMP. Position 237 (R237) interacts with 2',3'-cGAMP. 3',3'-c-di-GMP is bound by residues R237–S240 and T262. S240 carries the phosphoserine modification. T262 serves as a coordination point for 2',3'-cUAMP. T262 lines the 2',3'-cGAMP pocket. K337 is covalently cross-linked (Glycyl lysine isopeptide (Lys-Gly) (interchain with G-Cter in SUMO)). A C-terminal tail (CTT) region spans residues E339–I378. S354 is modified (phosphoserine; by MAP3K7). Phosphoserine; by TBK1 is present on residues S357 and S365. The short motif at L362–S365 is the pLxIS motif element.

Belongs to the STING family. Homodimer; forms a homodimer in absence of cyclic nucleotide (c-di-GMP or cGAMP); 'Lys-63'-linked ubiquitination at Lys-150 is required for homodimerization. Homotetramer; in presence of cyclic nucleotide (c-di-GMP or cGAMP), forms tetramers and higher-order oligomers through side-by-side packing. Interacts (when phosphorylated) with IRF3; following activation and phosphorylation on the pLxIS motif by TBK1, recruits IRF3. Interacts with RIGI, MAVS and SSR2. Interacts with RNF5 and TRIM56. Interacts with TBK1; when homodimer, leading to subsequent production of IFN-beta. Interacts with IFIT1 and IFIT2. Interacts with TRIM29; this interaction induces STING1 ubiquitination and subsequent degradation. Associates with the MHC-II complex. Interacts with STEEP1; interaction takes place upon cGAMP-activation and STING1 phosphorylation by MAP3K7/TAK1 and promotes STING1 translocation to COPII vesicles. Interacts with SEC24A, SEC24B and SEC24C; promoting translocation to COPII vesicles. Interacts (when ubiquitinated) with SQSTM1; leading to relocalization to autophagosomes. Interacts with SURF4. Interacts with HNRNPA2B1. Interacts with ZDHHC1; ZDHHC1 constitutively interacts with STING1 and in presence of DNA viruses activates it by promoting its cGAMP-induced oligomerization and the recruitment of downstream signaling components. Interacts with ZDHHC11; in presence of DNA viruses promotes the recruitment of IRF3 to STING1. Interacts with TOMM70. Interacts with IFI204. Interacts with TAB1; promoting recruitment of TAB1 to the endoplasmic reticulum membrane and subsequent activation of MAP3K7/TAK1. Interacts (via transmembrane domain) with TMEM203. Interacts with DDX41. In terms of processing, phosphorylation by TBK1 leads to activation and production of IFN-beta. Following cyclic nucleotide (c-di-GMP or cGAMP)-binding, activation and translocation from the endoplasmic reticulum, STING1 is phosphorylated by TBK1 at Ser-365 in the pLxIS motif. The phosphorylated pLxIS motif constitutes an IRF3-binding motif, leading to recruitment of the transcription factor IRF3 to induce type-I interferons and other cytokines. The phosphorylated pLxIS motif facilitates SENP2 recruitment during late phase of viral infection. Phosphorylated on tyrosine residues upon MHC-II aggregation. Dephosphorylation by PPP6C leads to inactivation and decreased production of IFN-beta. Phosphorylation at Ser-357 is also required to activate IRF3. Phosphorylation at Ser-354 by MAP3K7/TAK1 facilitates its interaction with STEEP1, promoting STING1 translocation to COPII vesicles. Post-translationally, ubiquitinated. Ubiquitinated via 'Lys-63'-linked ubiquitin chains in response to double-stranded DNA treatment, leading to relocalization to autophagosomes and subsequent degradation; this process is dependent on SQSTM1. 'Lys-63'-linked ubiquitination mediated by TRIM56 at Lys-150 promotes homodimerization and recruitment of the antiviral kinase TBK1 and subsequent production of IFN-beta. 'Lys-48'-linked polyubiquitination at Lys-150 occurring after viral infection is mediated by RNF5 and leads to proteasomal degradation. 'Lys-11'-linked polyubiquitination at Lys-150 by RNF26 leads to stabilize STING1: it protects STING1 from RNF5-mediated 'Lys-48'-linked polyubiquitination. 'Lys-33'-linked and 'Lys-48'-linked deubiquitinated by USP20; leading to its stabilization and promotion of innate antiviral response. 'Lys-48'-linked deubiquitinated by USP44; leading to its stabilization and promotion of innate antiviral response. Deubiquitinated by USP13; leading to inhibition of innate antiviral response. 'Lys-63'-linked deubiquitinated by USP49; leading to inhibition of the subsequent recruitment of TBK1 to the signaling complex. 'Lys-63'-linked ubiquitination mediated by RNF39 promotes the activation of the cGAS-STING pathway. MARCHF5-mediated ubiquitination prevents the oxidation-induced polymer formation. Sumoylated at Lys-337 by TRIM38 during the early phase of viral infection, promoting its stability by preventing its relocalization to autophagosomes and subsequent degradation. Desumoylated by SENP2 during the late phase of viral infection. In terms of processing, palmitoylation takes place in the Golgi apparatus and creates a platform for the recruitment of TBK1. In terms of tissue distribution, present in spleen and thymus tissue. Also present in dendritic cells (at protein level).

The protein resides in the endoplasmic reticulum membrane. Its subcellular location is the cytoplasm. It is found in the perinuclear region. The protein localises to the endoplasmic reticulum-Golgi intermediate compartment membrane. It localises to the golgi apparatus membrane. The protein resides in the cytoplasmic vesicle. Its subcellular location is the autophagosome membrane. It is found in the mitochondrion outer membrane. The protein localises to the cell membrane. It localises to the lysosome membrane. The catalysed reaction is H(+)(in) = H(+)(out). Its activity is regulated as follows. Activated by anticancer drug 5,6-dimethylxanthenone 4-acetic acid (DMXAA). Specifically inhibited by nitrofuran derivatives C-178 and C-176, which covalently bind Cys-91 and prevent palmitoylation and subsequent activation od STING1. Its function is as follows. Facilitator of innate immune signaling that acts as a sensor of cytosolic DNA from bacteria and viruses and promotes the production of type I interferon (IFN-alpha and IFN-beta). Innate immune response is triggered in response to non-CpG double-stranded DNA from viruses and bacteria delivered to the cytoplasm. Acts by binding cyclic dinucleotides: recognizes and binds cyclic di-GMP (c-di-GMP), a second messenger produced by bacteria, cyclic UMP-AMP (2',3'-cUAMP), and cyclic GMP-AMP (cGAMP), a messenger produced by CGAS in response to DNA virus in the cytosol. Upon binding to c-di-GMP, cUAMP or cGAMP, STING1 oligomerizes, translocates from the endoplasmic reticulum and is phosphorylated by TBK1 on the pLxIS motif, leading to recruitment and subsequent activation of the transcription factor IRF3 to induce expression of type I interferon and exert a potent anti-viral state. Exhibits 2',3' phosphodiester linkage-specific ligand recognition: can bind both 2'-3' linked cGAMP (2'-3'-cGAMP) and 3'-3' linked cGAMP but is preferentially activated by 2'-3' linked cGAMP. The preference for 2'-3'-cGAMP, compared to other linkage isomers is probably due to the ligand itself, whichs adopts an organized free-ligand conformation that resembles the STING1-bound conformation and pays low energy costs in changing into the active conformation. In addition to promote the production of type I interferons, plays a direct role in autophagy. Following cGAMP-binding, STING1 buds from the endoplasmic reticulum into COPII vesicles, which then form the endoplasmic reticulum-Golgi intermediate compartment (ERGIC). The ERGIC serves as the membrane source for WIPI2 recruitment and LC3 lipidation, leading to formation of autophagosomes that target cytosolic DNA or DNA viruses for degradation by the lysosome. Promotes autophagy by acting as a proton channel that directs proton efflux from the Golgi to facilitate MAP1LC3B/LC3B lipidation. The autophagy- and interferon-inducing activities can be uncoupled and autophagy induction is independent of TBK1 phosphorylation. Autophagy is also triggered upon infection by bacteria: following c-di-GMP-binding, which is produced by live Gram-positive bacteria, promotes reticulophagy. May be involved in translocon function, the translocon possibly being able to influence the induction of type I interferons. May be involved in transduction of apoptotic signals via its association with the major histocompatibility complex class II (MHC-II). This Mus musculus (Mouse) protein is Stimulator of interferon genes protein.